A 561-amino-acid chain; its full sequence is Putative transport protein DNO_0009 (561 aa).

A run of 5 helical transmembrane segments spans residues 4–24 (VAIT…LGNI), 29–49 (VGLS…IMNL), 74–94 (FGLI…FFAS), 104–124 (AFAA…YYLF), and 166–186 (MGYA…MWLI). RCK C-terminal domains follow at residues 198–283 (LQFF…ILGE) and 285–369 (AGHE…LIGN). 6 helical membrane-spanning segments follow: residues 379-399 (MLPV…PIYL), 411-433 (AGGP…LYWF), 447-467 (IVLF…STLL), 472-492 (FSWI…AGII), 501-521 (YLTI…LAFA), and 538-558 (VYPL…VLLW).

This sequence belongs to the AAE transporter (TC 2.A.81) family. YidE subfamily.

Its subcellular location is the cell membrane. The polypeptide is Putative transport protein DNO_0009 (Dichelobacter nodosus (strain VCS1703A)).